Here is a 478-residue protein sequence, read N- to C-terminus: Proline--tRNA ligase (478 aa).

The protein belongs to the class-II aminoacyl-tRNA synthetase family. ProS type 3 subfamily. In terms of assembly, homodimer.

The protein resides in the cytoplasm. It catalyses the reaction tRNA(Pro) + L-proline + ATP = L-prolyl-tRNA(Pro) + AMP + diphosphate. In terms of biological role, catalyzes the attachment of proline to tRNA(Pro) in a two-step reaction: proline is first activated by ATP to form Pro-AMP and then transferred to the acceptor end of tRNA(Pro). The chain is Proline--tRNA ligase from Ignicoccus hospitalis (strain KIN4/I / DSM 18386 / JCM 14125).